Reading from the N-terminus, the 127-residue chain is Evasin-4 (127 aa).

Residues 1-23 form the signal peptide; it reads MAFKYWFVFAAVLYARQWLSTKC. Disulfide bonds link C50–C69, C65–C112, C86–C117, and C107–C126. N-linked (GlcNAc...) asparagine glycans are attached at residues N54, N64, N70, N77, N83, N106, and N114.

Belongs to the evasin C8 family. Monomer.

The protein resides in the secreted. Salivary chemokine-binding protein which has chemokine-neutralizing activity and binds to host chemokines CCL1, CCL3, CCL5, CCL7, CCL8, CCL11, CCL14, CCL15, CCL16, CCL17, CCL18, CCL19, CCL21, CCL22, CCL23, CCL24, CCL25 and CCL26 with nanomolar affinity. Binds to CCL3 and CCL5 with 1:1 stoichiometry. Although binding to CCL25 is observed, does not inhibit CCL25-induced chemotaxis. Has been shown to reduce cardiac injury and inflammation in mice through its anti-CCL5 activity. This chain is Evasin-4, found in Rhipicephalus sanguineus (Brown dog tick).